The following is a 682-amino-acid chain: Penicillin-binding protein activator LpoA (682 aa).

The N-terminal stretch at 1–26 (MLSSITVRTKSGRLIPLVLAATLLAA) is a signal peptide. Residue Cys-27 is the site of N-palmitoyl cysteine attachment. Cys-27 carries S-diacylglycerol cysteine lipidation.

It belongs to the LpoA family. As to quaternary structure, interacts with PBP1a.

The protein resides in the cell outer membrane. In terms of biological role, regulator of peptidoglycan synthesis that is essential for the function of penicillin-binding protein 1A (PBP1a). The polypeptide is Penicillin-binding protein activator LpoA (Edwardsiella ictaluri (strain 93-146)).